A 603-amino-acid polypeptide reads, in one-letter code: uncharacterized protein (603 aa).

Over residues glutamate 496–lysine 513 the composition is skewed to acidic residues. Disordered regions lie at residues glutamate 496–glutamate 536 and alanine 549–glutamine 568. A compositionally biased stretch (polar residues) spans asparagine 517–glycine 533.

Belongs to the herpesviridae US22 family.

This is an uncharacterized protein from Human cytomegalovirus (strain AD169) (HHV-5).